A 647-amino-acid polypeptide reads, in one-letter code: Exoribonuclease 2 (647 aa).

The RNB domain occupies 192 to 519 (RIDLTSLDFV…NHRLLKAIIQ (328 aa)). One can recognise an S1 motif domain in the interval 564–646 (EQRFTAEIID…ETRNIVARPT (83 aa)).

This sequence belongs to the RNR ribonuclease family. RNase II subfamily.

Its subcellular location is the cytoplasm. It catalyses the reaction Exonucleolytic cleavage in the 3'- to 5'-direction to yield nucleoside 5'-phosphates.. Its function is as follows. Involved in mRNA degradation. Hydrolyzes single-stranded polyribonucleotides processively in the 3' to 5' direction. In Photorhabdus laumondii subsp. laumondii (strain DSM 15139 / CIP 105565 / TT01) (Photorhabdus luminescens subsp. laumondii), this protein is Exoribonuclease 2.